A 309-amino-acid chain; its full sequence is Heme-dependent oxidative N-demethylase beta subunit (309 aa).

The FAD-binding FR-type domain maps to 2 to 103; it reads STLLDVRVAA…SPPANLFPLH (102 aa). The 2Fe-2S ferredoxin-type domain occupies 226–309; that stretch reads FRVELARSGQ…GCGSPILLDL (84 aa). [2Fe-2S] cluster-binding residues include Cys-260, Cys-265, Cys-268, and Cys-296.

It belongs to the PDR/VanB family. As to quaternary structure, the heme-dependent oxidative N-demethylase (HODM) is a heterotetramer composed of a catalytic alpha subunit, a FMN/2Fe-2S-dependent oxidoreductase beta subunit, a gamma subunit with putative aminotransferase activity, and a delta subunit of unknown function. It depends on [2Fe-2S] cluster as a cofactor. FMN serves as cofactor.

Functionally, component of the heme-dependent oxidative N-demethylase (HODM) enzyme, that catalyzes the NADPH-dependent oxidation of dimethylamine (DMA) to methylamine (MA) and formaldehyde. Functions in bacterial methylated amine catabolism, linking alkylamine oxidation to the tetrahydrofolate C1 pool. The beta subunit of HODM binds FMN and a 2Fe-2S cluster, and likely reduces the ferric heme iron of the alpha subunit to ferrous using NADPH. The sequence is that of Heme-dependent oxidative N-demethylase beta subunit from Ectopseudomonas mendocina (strain ymp) (Pseudomonas mendocina).